The sequence spans 505 residues: ATP synthase subunit alpha (505 aa).

An ATP-binding site is contributed by 169 to 176 (GDRQTGKT).

This sequence belongs to the ATPase alpha/beta chains family. As to quaternary structure, F-type ATPases have 2 components, CF(1) - the catalytic core - and CF(0) - the membrane proton channel. CF(1) has five subunits: alpha(3), beta(3), gamma(1), delta(1), epsilon(1). CF(0) has three main subunits: a(1), b(2) and c(9-12). The alpha and beta chains form an alternating ring which encloses part of the gamma chain. CF(1) is attached to CF(0) by a central stalk formed by the gamma and epsilon chains, while a peripheral stalk is formed by the delta and b chains.

It is found in the cell membrane. The catalysed reaction is ATP + H2O + 4 H(+)(in) = ADP + phosphate + 5 H(+)(out). Its function is as follows. Produces ATP from ADP in the presence of a proton gradient across the membrane. The alpha chain is a regulatory subunit. This Alkaliphilus oremlandii (strain OhILAs) (Clostridium oremlandii (strain OhILAs)) protein is ATP synthase subunit alpha.